Here is a 488-residue protein sequence, read N- to C-terminus: Probable cytosol aminopeptidase (488 aa).

Mn(2+)-binding residues include lysine 254 and aspartate 259. The active site involves lysine 266. The Mn(2+) site is built by aspartate 277, aspartate 336, and glutamate 338. The active site involves arginine 340.

It belongs to the peptidase M17 family. Mn(2+) serves as cofactor.

It is found in the cytoplasm. It carries out the reaction Release of an N-terminal amino acid, Xaa-|-Yaa-, in which Xaa is preferably Leu, but may be other amino acids including Pro although not Arg or Lys, and Yaa may be Pro. Amino acid amides and methyl esters are also readily hydrolyzed, but rates on arylamides are exceedingly low.. The enzyme catalyses Release of an N-terminal amino acid, preferentially leucine, but not glutamic or aspartic acids.. Presumably involved in the processing and regular turnover of intracellular proteins. Catalyzes the removal of unsubstituted N-terminal amino acids from various peptides. This Roseiflexus castenholzii (strain DSM 13941 / HLO8) protein is Probable cytosol aminopeptidase.